The chain runs to 234 residues: Polycomb group RING finger protein 5-A (234 aa).

Residues Cys18–Gly57 form an RING-type zinc finger. Residues Phe97–Tyr130 are disordered.

As to quaternary structure, component of a PRC1-like complex.

The protein localises to the nucleus. Component of Polycomb group (PcG) multiprotein complexes; the complex class is required to maintain the transcriptionally repressive state of some genes. This is Polycomb group RING finger protein 5-A from Danio rerio (Zebrafish).